The sequence spans 513 residues: ATP synthase subunit alpha (513 aa).

An ATP-binding site is contributed by 169 to 176 (GDRQCGKT).

This sequence belongs to the ATPase alpha/beta chains family. As to quaternary structure, F-type ATPases have 2 components, CF(1) - the catalytic core - and CF(0) - the membrane proton channel. CF(1) has five subunits: alpha(3), beta(3), gamma(1), delta(1), epsilon(1). CF(0) has three main subunits: a(1), b(2) and c(9-12). The alpha and beta chains form an alternating ring which encloses part of the gamma chain. CF(1) is attached to CF(0) by a central stalk formed by the gamma and epsilon chains, while a peripheral stalk is formed by the delta and b chains.

The protein localises to the cell inner membrane. It catalyses the reaction ATP + H2O + 4 H(+)(in) = ADP + phosphate + 5 H(+)(out). Produces ATP from ADP in the presence of a proton gradient across the membrane. The alpha chain is a regulatory subunit. This Burkholderia mallei (strain NCTC 10229) protein is ATP synthase subunit alpha.